The chain runs to 741 residues: MRNFRRFTIALLVLFLGPIGAADTKETPGMDRQNTSNQFWWPERLDLAPLRQHGSESNPLGRQFHYAKEFKELDIQTLKEEIKTVMKTSQDWWPADYGHYGPFFIRMAWHSAGTYRISDGRGGAGGGQQRFEPLNSWPDNANLDKARRLLWPIKKKYGKKISWADLMVLTGNVALESMGFKTYGFAGGRTDDWEADLVYWGPEKKFLEDQRYKGNRELKNPLAAVQMGLIYVNPEGPNGNPDPLAAAKDIRETFGRMAMNDEETVALIAGGHTFGKAHGKSDPSKHVGKEPAAAGLEEQGFGWKNNYKKGNAEDTITSGLEGAWTANPTKWTTQYLNNLFGFEWVQTKSPAGAIQWVPKDGAGANMVPDAHDKSLRHAPIMFTTDLALKFDPSYKVIAKRFQENPKEFELAFAKAWFKLTHRDMGPLTRYIGKDLPKEPLIWQDPVPAVNHKLVGPKEIESLKGKILKSGLSVPQLVRTAWASAASFRSTDMRGGANGARIRLSPQKNWPVNDPDELSKVLKKLEQIQEEFNKSGNKISLADLIVLAGNAAIEEAAKKAGVKVTVPFTPGRTDATIEQTDEYSFSVLEPKADAFRNYYGPGNLMSPTEMLVDRANMLSLSIPEMTVLLGGMRSLDANAGKSKHGILTTKPGVLSNDFFVNLLDMSTKWQKSEQTEGLYEGLDRKTGSKRWTATSVDLIFGSHSELRAVAEVYASDDAKEKFVKDFVSAWNKVMMLDRFDVK.

The first 21 residues, 1 to 21 (MRNFRRFTIALLVLFLGPIGA), serve as a signal peptide directing secretion. The tryptophyl-tyrosyl-methioninium (Trp-Tyr) (with M-257) cross-link spans 109-231 (WHSAGTYRIS…LAAVQMGLIY (123 aa)). H110 acts as the Proton acceptor in catalysis. Residues 231–257 (YVNPEGPNGNPDPLAAAKDIRETFGRM) constitute a cross-link (tryptophyl-tyrosyl-methioninium (Tyr-Met) (with W-109)). Residue H272 participates in heme b binding.

It belongs to the peroxidase family. Peroxidase/catalase subfamily. Homodimer or homotetramer. The cofactor is heme b. In terms of processing, formation of the three residue Trp-Tyr-Met cross-link is important for the catalase, but not the peroxidase activity of the enzyme.

The catalysed reaction is H2O2 + AH2 = A + 2 H2O. It carries out the reaction 2 H2O2 = O2 + 2 H2O. In terms of biological role, bifunctional enzyme with both catalase and broad-spectrum peroxidase activity. This Leptospira biflexa serovar Patoc (strain Patoc 1 / Ames) protein is Catalase-peroxidase.